The primary structure comprises 164 residues: Crossover junction endodeoxyribonuclease RuvC (164 aa).

Catalysis depends on residues D7, E67, and D139. 3 residues coordinate Mg(2+): D7, E67, and D139.

This sequence belongs to the RuvC family. Homodimer which binds Holliday junction (HJ) DNA. The HJ becomes 2-fold symmetrical on binding to RuvC with unstacked arms; it has a different conformation from HJ DNA in complex with RuvA. In the full resolvosome a probable DNA-RuvA(4)-RuvB(12)-RuvC(2) complex forms which resolves the HJ. Requires Mg(2+) as cofactor.

It localises to the cytoplasm. It catalyses the reaction Endonucleolytic cleavage at a junction such as a reciprocal single-stranded crossover between two homologous DNA duplexes (Holliday junction).. Functionally, the RuvA-RuvB-RuvC complex processes Holliday junction (HJ) DNA during genetic recombination and DNA repair. Endonuclease that resolves HJ intermediates. Cleaves cruciform DNA by making single-stranded nicks across the HJ at symmetrical positions within the homologous arms, yielding a 5'-phosphate and a 3'-hydroxyl group; requires a central core of homology in the junction. The consensus cleavage sequence is 5'-(A/T)TT(C/G)-3'. Cleavage occurs on the 3'-side of the TT dinucleotide at the point of strand exchange. HJ branch migration catalyzed by RuvA-RuvB allows RuvC to scan DNA until it finds its consensus sequence, where it cleaves and resolves the cruciform DNA. This is Crossover junction endodeoxyribonuclease RuvC from Geobacter metallireducens (strain ATCC 53774 / DSM 7210 / GS-15).